Here is a 493-residue protein sequence, read N- to C-terminus: Accumulates dyads protein 4 (493 aa).

Interacts with CNM67, SPO21/MPC70 and NUD1.

It localises to the cytoplasm. The protein localises to the cytoskeleton. It is found in the microtubule organizing center. Its subcellular location is the spindle pole body. Involved in the pathway that organizes the shaping and sizing of the prospore membrane (PSM) during sporulation. May be required to stabilize the outer plaque of the spindle pole body (SPB). The chain is Accumulates dyads protein 4 (ADY4) from Saccharomyces cerevisiae (strain ATCC 204508 / S288c) (Baker's yeast).